A 1008-amino-acid chain; its full sequence is MDTAEDPAWLQLLQKDSSPPGPRPTAFFCPQDGSLGAGSSAMRDYCPSQQKASPAPPRHTPDQSPGMESRHRSPSGAGEGASCSDGPRGSLACPSPTCFSPQESPSKETLEAHGASISGTPEATTSGKPEPVSSVKTEPKSSDDRNPMFLEKMDFKSSKQADSTSIGKEDPGSSRKADPMFTGKAEPEILGKGDPVAPGRMDPMTVRKEDLGSLGKVDPLCSSKTYTVSPRKEDPGSLRKVDPVSSDKVDPVFPRKEEPRYSGKEHPVSSEKVAPTSAEKVDLVLSGKRDPGPSGKADPMPLESMDSASTGKTEPGLLGKLIPGSSGKNGPVSSGTGAPGSLGRLDPTCLGMADPASVGNVETVPATKEDSRFLGKMDPASSGEGRPVSGHTDTTASAKTDLTSLKNVDPMSSGKVDPVSLGKMDPMCSGKPELLSPGQAERVSVGKAGTVSPGKEDPVSSRREDPISAGSRKTSSEKVNPESSGKTNPVSSGPGDPRSLGTAGPPSAVKAEPATGGKGDPLSSEKAGLVASGKAAPTASGKAEPLAVGKEDPVSKGKADAGPSGQGDSVSIGKVVSTPGKTVPVPSGKVDPVSLGKAEAIPEGKVGSLPLEKGSPVTTTKADPRASGKAQPQSGGKAETKLPGQEGAAAPGEAGAVCLKKETPQASEKVDPGSCRKAEPLASGKGEPVSLGKADSAPSRKTESPSLGKVVPLSLEKTKPSSSSRQLDRKALGSARSPEGARGSEGRVEPKAEPVSSTEASSLGQKDLEAAGAERSPCPEAAAPPPGPRTRDNFTKAPSWEASAPPPPREDAGTQAGAQACVSVAVSPMSPQDGAGGSAFSFQAAPRAPSPPSRRDAGLQVSLGAAETRSVATGPMTPQAAAPPAFPEVRVRPGSALAAAVAPPEPAEPVRDVSWDEKGMTWEVYGAAMEVEVLGMAIQKHLERQIEEHGRQGAPAPPPAARAGPGRSGSVRTAPPDGAAKRPPGLFRALLQSVRRPRCCSRAGPTAE.

Residues 1–859 (MDTAEDPAWL…SPPSRRDAGL (859 aa)) are disordered. At threonine 60 the chain carries Phosphothreonine. Residues serine 64 and serine 75 each carry the phosphoserine modification. The span at 117–127 (ISGTPEATTSG) shows a compositional bias: polar residues. Basic and acidic residues-rich tracts occupy residues 137 to 159 (TEPKSSDDRNPMFLEKMDFKSSK), 167 to 178 (GKEDPGSSRKAD), 230 to 269 (PRKEDPGSLRKVDPVSSDKVDPVFPRKEEPRYSGKEHPVS), and 279 to 291 (EKVDLVLSGKRDP). Serine 237 carries the post-translational modification Phosphoserine. Composition is skewed to polar residues over residues 326 to 336 (SGKNGPVSSGT) and 391 to 406 (HTDTTASAKTDLTSLK). Phosphoserine is present on residues serine 436 and serine 452. The segment covering 454–466 (GKEDPVSSRREDP) has biased composition (basic and acidic residues). Residues 481-491 (PESSGKTNPVS) are compositionally biased toward polar residues. The segment covering 549–559 (GKEDPVSKGKA) has biased composition (basic and acidic residues). Position 615 is a phosphoserine (serine 615). Over residues 643–656 (PGQEGAAAPGEAGA) the composition is skewed to low complexity. Over residues 659-679 (LKKETPQASEKVDPGSCRKAE) the composition is skewed to basic and acidic residues. A Phosphoserine modification is found at serine 737. Positions 742-752 (RGSEGRVEPKA) are enriched in basic and acidic residues. A compositionally biased stretch (polar residues) spans 755-764 (VSSTEASSLG). A Phosphoserine modification is found at serine 799. Residues 838–847 (SAFSFQAAPR) are compositionally biased toward low complexity. Residue threonine 877 is modified to Phosphothreonine. Residues serine 895 and serine 914 each carry the phosphoserine modification. Residues 899–1008 (AAVAPPEPAE…CCSRAGPTAE (110 aa)) form an interaction with GNAO1 region. The disordered stretch occupies residues 943 to 986 (ERQIEEHGRQGAPAPPPAARAGPGRSGSVRTAPPDGAAKRPPGL). Phosphoserine is present on serine 993. Residues cysteine 999 and cysteine 1000 are each lipidated (S-palmitoyl cysteine).

As to quaternary structure, interacts with activated forms of GNAI1, GNAO1 and GNAZ. Palmitoylation on Cys-999 and/or Cys-1000 is required for membrane targeting. Widely expressed in the central nervous system, with highest levels in spinal cord.

It is found in the cell membrane. The protein localises to the cell projection. It localises to the growth cone. In terms of biological role, may be involved in neurite outgrowth. This is G protein-regulated inducer of neurite outgrowth 1 (GPRIN1) from Homo sapiens (Human).